The following is a 37-amino-acid chain: Large ribosomal subunit protein bL36c (37 aa).

It belongs to the bacterial ribosomal protein bL36 family.

It is found in the plastid. The protein resides in the chloroplast. In Adiantum capillus-veneris (Maidenhair fern), this protein is Large ribosomal subunit protein bL36c.